We begin with the raw amino-acid sequence, 427 residues long: L-threonine dehydratase biosynthetic IlvA (427 aa).

At Lys63 the chain carries N6-(pyridoxal phosphate)lysine. Pyridoxal 5'-phosphate contacts are provided by residues Asn90, 193-197 (GGGGC), and Ser319. Positions 343-417 (HYFLVDFPQK…TEMHVETLQP (75 aa)) constitute an ACT-like domain.

This sequence belongs to the serine/threonine dehydratase family. As to quaternary structure, homotetramer. Pyridoxal 5'-phosphate is required as a cofactor.

The enzyme catalyses L-threonine = 2-oxobutanoate + NH4(+). It participates in amino-acid biosynthesis; L-isoleucine biosynthesis; 2-oxobutanoate from L-threonine: step 1/1. Its function is as follows. Catalyzes the anaerobic formation of alpha-ketobutyrate and ammonia from threonine in a two-step reaction. The first step involved a dehydration of threonine and a production of enamine intermediates (aminocrotonate), which tautomerizes to its imine form (iminobutyrate). Both intermediates are unstable and short-lived. The second step is the nonenzymatic hydrolysis of the enamine/imine intermediates to form 2-ketobutyrate and free ammonia. In the low water environment of the cell, the second step is accelerated by RidA. The sequence is that of L-threonine dehydratase biosynthetic IlvA (ilvA) from Mycobacterium leprae (strain TN).